A 267-amino-acid chain; its full sequence is 5'-methylthioadenosine nucleosidase (267 aa).

Residue Glu-38 is the Proton acceptor of the active site. S-methyl-5'-thioadenosine-binding positions include Thr-116, 199-202, and Asp-225; that span reads KDME. Lys-199 and Asp-225 together coordinate adenine. Asp-225 serves as the catalytic Proton donor.

The protein belongs to the PNP/UDP phosphorylase family. MtnN subfamily. Homodimer. Interacts with CBL3 in a calcium-dependent manner. Expressed in roots, leaves, stems, cauline leaves and flowers.

It catalyses the reaction S-methyl-5'-thioadenosine + H2O = 5-(methylsulfanyl)-D-ribose + adenine. The protein operates within amino-acid biosynthesis; L-methionine biosynthesis via salvage pathway; S-methyl-5-thio-alpha-D-ribose 1-phosphate from S-methyl-5'-thioadenosine (hydrolase route): step 1/2. With respect to regulation, inhibited by CBL3 in a calcium-dependent manner. Inhibited by 5'-methylthiotubercidin (MTT) and by formycin A (FMA). Its function is as follows. Enzyme of the methionine cycle that catalyzes the irreversible cleavage of the glycosidic bond in 5'-methylthioadenosine (MTA) to adenine and 5'-methylthioribose. Contributes to the maintenance of AdoMet homeostasis and is required to sustain high rates of ethylene synthesis. Inactive towards S-adenosylhomocysteine (SAH/AdoHcy). The sequence is that of 5'-methylthioadenosine nucleosidase (MTN1) from Arabidopsis thaliana (Mouse-ear cress).